The primary structure comprises 840 residues: MWSGIPIFALLSSIGIAAAETGLDGWLRYASVPCNGNCQRALPSHIVTLNSTRSSPVYVAGQELQDGLHQILGKHASVKSTGCSTDSSIIVGTVEAYRQVCNAGRQVPQFDVDGFWLSIREKSVLIVGQSERGALYGAYEYLSMLAQGNFSQVSYATSPHAPIRWVNQWDNMDGSIERGYGGPSIFFKDGVIRQDLSRVQQYARLLASVRINGIIVNNVNANASLLMPSNMDGLARIADIFRPYGIRVGISLNFASPSTLGNLSTYDPFDSSVIAWWGNVTDQLYARIPDMAGYLVKANSEGQPGPTTYNRTLADGANMFARALKPYGGVVMFRAFVYDHHISEDNWYNDRANAAVDFFKPLDGKFDDNVVVQIKYGPIDFQVREPASPLFANLYKTNTAIELQVTQEYLGQQSHLVYLPPLWQTILGFDLRVDQKPSLVRDIISGQRFDRPLGGWAAVVNVGTNSTWLGSHLAMSNLYAYGRLAWEPTLDSEDIVQDWIRLTFGLDRRIVDTLTQMSMESWPAYENYSGNLGIQTLTDILYTHYGPNPASQDGNGWGQWTRADHLSIGMDRTVKNGTKFSGQYPAEVAAMYENIETTPDNLLLWFHHVNYTQRLHSGKTVIQHFYDAHYTGAETAQTFVSQWESLRERIDAERYQHVLTRLIYQAGHSIVWRDAINNFYHNLSGIADEKQRVGHHPWRVEAEDMQLDGYVPYAVSPFETASNYTAIVTASNGTTGTASATLDFKTGTYDLGINYYDMYGGKSHWTVYLNDRVVGQWQGNSEDVLSHTPSIYLDGHSATRITFRDVKIHKGDRLKIVGKPDGVEPAPLDYVVVLPPGIVD.

Residues 1-19 (MWSGIPIFALLSSIGIAAA) form the signal peptide. N-linked (GlcNAc...) asparagine glycosylation is found at Asn-50, Asn-149, Asn-222, Asn-262, Asn-279, Asn-310, Asn-465, Asn-527, Asn-576, Asn-610, Asn-682, Asn-723, and Asn-732.

Belongs to the glycosyl hydrolase 67 family.

Its subcellular location is the secreted. The catalysed reaction is an alpha-D-glucuronoside + H2O = D-glucuronate + an alcohol. Alpha-glucuronidase involved in the hydrolysis of xylan, a major structural heterogeneous polysaccharide found in plant biomass representing the second most abundant polysaccharide in the biosphere, after cellulose. Releases 4-O-methylglucuronic acid from xylan. The protein is Probable alpha-glucuronidase A (aguA) of Aspergillus fumigatus (strain ATCC MYA-4609 / CBS 101355 / FGSC A1100 / Af293) (Neosartorya fumigata).